Reading from the N-terminus, the 969-residue chain is Probable Rho-type GTPase-activating protein 3 (969 aa).

2 consecutive LIM zinc-binding domains span residues 17–81 and 76–135; these read TVCF…CTAC and HTCT…RHPS. Disordered regions lie at residues 170–223, 348–459, and 613–646; these read IEIM…ADSL, ATSP…VEEL, and TSSK…SPNL. The segment covering 193–202 has biased composition (polar residues); it reads ETPTNMSQAE. 2 stretches are compositionally biased toward low complexity: residues 212–223 and 350–361; these read DSNLASNSADSL and SPFRPFSPSYRS. Composition is skewed to polar residues over residues 369–392 and 418–432; these read TRSP…SFAQ and LSET…SLGS. Positions 450–459 are enriched in basic and acidic residues; the sequence is SERDSDVEEL. Low complexity predominate over residues 613 to 623; it reads TSSKNTTSSIN. The span at 624–637 shows a compositional bias: polar residues; it reads PLTAVSSNSGQSSG. The Phorbol-ester/DAG-type zinc finger occupies 697–744; that stretch reads DHVFHVNAIFKPSRCYICSESVWGSELRCFHCSISCHSRCLKRLFAES. Residues 780–966 enclose the Rho-GAP domain; it reads RSLENQLKIE…FMLDNVDKIL (187 aa).

Interacts with dil1.

It is found in the cell tip. In terms of biological role, GTPase-activating protein for Rho-type proteins. This Schizosaccharomyces pombe (strain 972 / ATCC 24843) (Fission yeast) protein is Probable Rho-type GTPase-activating protein 3 (rga3).